We begin with the raw amino-acid sequence, 352 residues long: DNA polymerase IV (352 aa).

The region spanning 4–185 is the UmuC domain; the sequence is IIHVDMDCFF…LPLSKIPGVG (182 aa). Mg(2+)-binding residues include D8 and D103. Residue E104 is part of the active site.

Belongs to the DNA polymerase type-Y family. In terms of assembly, monomer. Mg(2+) is required as a cofactor.

It is found in the cytoplasm. It carries out the reaction DNA(n) + a 2'-deoxyribonucleoside 5'-triphosphate = DNA(n+1) + diphosphate. Functionally, poorly processive, error-prone DNA polymerase involved in untargeted mutagenesis. Copies undamaged DNA at stalled replication forks, which arise in vivo from mismatched or misaligned primer ends. These misaligned primers can be extended by PolIV. Exhibits no 3'-5' exonuclease (proofreading) activity. May be involved in translesional synthesis, in conjunction with the beta clamp from PolIII. This Yersinia pestis bv. Antiqua (strain Antiqua) protein is DNA polymerase IV.